A 471-amino-acid chain; its full sequence is Glutamate--tRNA ligase (471 aa).

The 'HIGH' region motif lies at 9 to 19 (PSPTGYLHVGG). Residues cysteine 98, cysteine 100, cysteine 125, and histidine 127 each coordinate Zn(2+). Residues 237–241 (KLSKR) carry the 'KMSKS' region motif. Residue lysine 240 participates in ATP binding.

It belongs to the class-I aminoacyl-tRNA synthetase family. Glutamate--tRNA ligase type 1 subfamily. In terms of assembly, monomer. The cofactor is Zn(2+).

Its subcellular location is the cytoplasm. It carries out the reaction tRNA(Glu) + L-glutamate + ATP = L-glutamyl-tRNA(Glu) + AMP + diphosphate. Functionally, catalyzes the attachment of glutamate to tRNA(Glu) in a two-step reaction: glutamate is first activated by ATP to form Glu-AMP and then transferred to the acceptor end of tRNA(Glu). The sequence is that of Glutamate--tRNA ligase from Shigella boydii serotype 4 (strain Sb227).